The sequence spans 333 residues: Adenosine deaminase (333 aa).

Residues His12 and His14 each contribute to the Zn(2+) site. 2 residues coordinate substrate: His14 and Asp16. Pentostatin contacts are provided by residues 14 to 16, Ser141, and Gly170; that span reads HLD. Gly170 is a substrate binding site. His197 is a Zn(2+) binding site. Pentostatin is bound by residues Glu200, His221, and Asp278. The Proton donor role is filled by Glu200. Residue Asp278 coordinates Zn(2+). Asp279 contributes to the substrate binding site.

The protein belongs to the metallo-dependent hydrolases superfamily. Adenosine and AMP deaminases family. Adenosine deaminase subfamily. Zn(2+) serves as cofactor.

The catalysed reaction is adenosine + H2O + H(+) = inosine + NH4(+). It carries out the reaction 2'-deoxyadenosine + H2O + H(+) = 2'-deoxyinosine + NH4(+). Catalyzes the hydrolytic deamination of adenosine and 2-deoxyadenosine. This chain is Adenosine deaminase, found in Salmonella typhimurium (strain LT2 / SGSC1412 / ATCC 700720).